Consider the following 219-residue polypeptide: Probable GTP-binding protein EngB (219 aa).

Positions 40–212 (LLPEIAFIGK…KASLAKCIIK (173 aa)) constitute an EngB-type G domain. GTP-binding positions include 48–55 (GKSNVGKS), 75–79 (GRTGQ), 93–96 (DLPG), 160–163 (TKFD), and 191–193 (VSS). Residues S55 and T77 each coordinate Mg(2+).

Belongs to the TRAFAC class TrmE-Era-EngA-EngB-Septin-like GTPase superfamily. EngB GTPase family. Requires Mg(2+) as cofactor.

Necessary for normal cell division and for the maintenance of normal septation. This is Probable GTP-binding protein EngB from Rickettsia canadensis (strain McKiel).